A 189-amino-acid polypeptide reads, in one-letter code: HGPRTase-like protein (189 aa).

Belongs to the purine/pyrimidine phosphoribosyltransferase family. Archaeal HPRT subfamily.

May catalyze a purine salvage reaction, the substrate is unknown. This Natronomonas pharaonis (strain ATCC 35678 / DSM 2160 / CIP 103997 / JCM 8858 / NBRC 14720 / NCIMB 2260 / Gabara) (Halobacterium pharaonis) protein is HGPRTase-like protein.